We begin with the raw amino-acid sequence, 101 residues long: Small ribosomal subunit protein bS18c (101 aa).

The segment covering 1 to 19 (MDKSKRPFRKSKRSFRRRL) has biased composition (basic residues). 2 disordered regions span residues 1-23 (MDKS…PPIG) and 82-101 (KQFE…TRNK).

It belongs to the bacterial ribosomal protein bS18 family. Part of the 30S ribosomal subunit.

It localises to the plastid. Its subcellular location is the chloroplast. In Drimys granadensis, this protein is Small ribosomal subunit protein bS18c.